The sequence spans 382 residues: ATP phosphoribosyltransferase regulatory subunit (382 aa).

It belongs to the class-II aminoacyl-tRNA synthetase family. HisZ subfamily. As to quaternary structure, heteromultimer composed of HisG and HisZ subunits.

Its subcellular location is the cytoplasm. Its pathway is amino-acid biosynthesis; L-histidine biosynthesis; L-histidine from 5-phospho-alpha-D-ribose 1-diphosphate: step 1/9. Required for the first step of histidine biosynthesis. May allow the feedback regulation of ATP phosphoribosyltransferase activity by histidine. This is ATP phosphoribosyltransferase regulatory subunit from Albidiferax ferrireducens (strain ATCC BAA-621 / DSM 15236 / T118) (Rhodoferax ferrireducens).